We begin with the raw amino-acid sequence, 174 residues long: Gamma-crystallin C (174 aa).

2 consecutive Beta/gamma crystallin 'Greek key' domains span residues 2-40 (GKITFYEDRGFQGRCYQCSSDCPNLQPYFSRCNSIRVDS) and 41-83 (GCWM…CLIS). S-methylcysteine is present on C23. The connecting peptide stretch occupies residues 84–87 (DTSS). Beta/gamma crystallin 'Greek key' domains follow at residues 88–128 (HRLR…HVLE) and 129–171 (GCWV…RRVV).

This sequence belongs to the beta/gamma-crystallin family.

Functionally, crystallins are the dominant structural components of the vertebrate eye lens. The chain is Gamma-crystallin C (CRYGC) from Bos taurus (Bovine).